The sequence spans 232 residues: Ion-translocating oxidoreductase complex subunit E (232 aa).

A run of 6 helical transmembrane segments spans residues 18-38 (GLVQ…LTNA), 39-59 (LGLG…VSLV), 69-89 (IPVF…LINA), 93-113 (GLYL…IIIG), 127-147 (AAFD…VLGA), and 182-202 (PFLL…LIAL).

It belongs to the NqrDE/RnfAE family. The complex is composed of six subunits: RnfA, RnfB, RnfC, RnfD, RnfE and RnfG.

Its subcellular location is the cell inner membrane. Functionally, part of a membrane-bound complex that couples electron transfer with translocation of ions across the membrane. The sequence is that of Ion-translocating oxidoreductase complex subunit E from Shewanella sp. (strain ANA-3).